The sequence spans 544 residues: CTP synthase (544 aa).

Residues 1–265 (MTKFIFVTGG…DNIITEQLQL (265 aa)) form an amidoligase domain region. Serine 13 contributes to the CTP binding site. Residue serine 13 coordinates UTP. ATP-binding positions include 14–19 (SLGKGI) and aspartate 71. Aspartate 71 and glutamate 139 together coordinate Mg(2+). Residues 146 to 148 (DIE), 186 to 191 (KTKPTQ), and lysine 222 contribute to the CTP site. UTP-binding positions include 186–191 (KTKPTQ) and lysine 222. A Glutamine amidotransferase type-1 domain is found at 290-544 (KIAMVGKYVD…VKAALNNKKA (255 aa)). Residue glycine 353 participates in L-glutamine binding. Catalysis depends on cysteine 380, which acts as the Nucleophile; for glutamine hydrolysis. L-glutamine is bound by residues 381–384 (LGMQ), glutamate 404, and arginine 471. Residues histidine 517 and glutamate 519 contribute to the active site.

Belongs to the CTP synthase family. As to quaternary structure, homotetramer.

It catalyses the reaction UTP + L-glutamine + ATP + H2O = CTP + L-glutamate + ADP + phosphate + 2 H(+). The enzyme catalyses L-glutamine + H2O = L-glutamate + NH4(+). It carries out the reaction UTP + NH4(+) + ATP = CTP + ADP + phosphate + 2 H(+). Its pathway is pyrimidine metabolism; CTP biosynthesis via de novo pathway; CTP from UDP: step 2/2. Its activity is regulated as follows. Allosterically activated by GTP, when glutamine is the substrate; GTP has no effect on the reaction when ammonia is the substrate. The allosteric effector GTP functions by stabilizing the protein conformation that binds the tetrahedral intermediate(s) formed during glutamine hydrolysis. Inhibited by the product CTP, via allosteric rather than competitive inhibition. Its function is as follows. Catalyzes the ATP-dependent amination of UTP to CTP with either L-glutamine or ammonia as the source of nitrogen. Regulates intracellular CTP levels through interactions with the four ribonucleotide triphosphates. The chain is CTP synthase from Neisseria gonorrhoeae (strain ATCC 700825 / FA 1090).